A 450-amino-acid chain; its full sequence is F-box protein KIB3 (450 aa).

The F-box domain occupies 20–50 (DLVRLILERLSFVDFHRARCVSSTWYVASKS).

It is found in the cytoplasm. Its subcellular location is the nucleus. It localises to the nucleolus. In terms of biological role, component of SCF(ASK-cullin-F-box) E3 ubiquitin ligase complexes, which may mediate the ubiquitination and subsequent proteasomal degradation of target proteins. Required for brassinosteroid (BR) signal transduction. Mediates ASK7/BIN2/SK21 inactivation both by competing with substrate binding (e.g. BZR1) and by promoting its ubiquitination and subsequent proteasomal degradation. This chain is F-box protein KIB3, found in Arabidopsis thaliana (Mouse-ear cress).